A 302-amino-acid polypeptide reads, in one-letter code: Methionyl-tRNA formyltransferase (302 aa).

Ser-108–Pro-111 is a binding site for (6S)-5,6,7,8-tetrahydrofolate.

This sequence belongs to the Fmt family.

It carries out the reaction L-methionyl-tRNA(fMet) + (6R)-10-formyltetrahydrofolate = N-formyl-L-methionyl-tRNA(fMet) + (6S)-5,6,7,8-tetrahydrofolate + H(+). Attaches a formyl group to the free amino group of methionyl-tRNA(fMet). The formyl group appears to play a dual role in the initiator identity of N-formylmethionyl-tRNA by promoting its recognition by IF2 and preventing the misappropriation of this tRNA by the elongation apparatus. The chain is Methionyl-tRNA formyltransferase from Sulfurimonas denitrificans (strain ATCC 33889 / DSM 1251) (Thiomicrospira denitrificans (strain ATCC 33889 / DSM 1251)).